The sequence spans 206 residues: Large ribosomal subunit protein uL4 (206 aa).

A disordered region spans residues 63–97 (MYKQKGTGRARHHSARAPQFRGGGKAHGPVVRSHE). Over residues 64-77 (YKQKGTGRARHHSA) the composition is skewed to basic residues.

Belongs to the universal ribosomal protein uL4 family. Part of the 50S ribosomal subunit.

Functionally, one of the primary rRNA binding proteins, this protein initially binds near the 5'-end of the 23S rRNA. It is important during the early stages of 50S assembly. It makes multiple contacts with different domains of the 23S rRNA in the assembled 50S subunit and ribosome. In terms of biological role, forms part of the polypeptide exit tunnel. This Rhizobium leguminosarum bv. trifolii (strain WSM2304) protein is Large ribosomal subunit protein uL4.